The primary structure comprises 410 residues: Adenosylhomocysteinase (410 aa).

Substrate is bound by residues aspartate 117 and glutamate 142. 143–145 (TTT) contributes to the NAD(+) binding site. Substrate is bound by residues lysine 172 and aspartate 176. Residues asparagine 177, 206–211 (GYGYCG), glutamate 229, 285–287 (AGH), and asparagine 332 each bind NAD(+).

This sequence belongs to the adenosylhomocysteinase family. NAD(+) is required as a cofactor.

The protein localises to the cytoplasm. The catalysed reaction is S-adenosyl-L-homocysteine + H2O = L-homocysteine + adenosine. It participates in amino-acid biosynthesis; L-homocysteine biosynthesis; L-homocysteine from S-adenosyl-L-homocysteine: step 1/1. May play a key role in the regulation of the intracellular concentration of adenosylhomocysteine. This is Adenosylhomocysteinase from Thermoplasma acidophilum (strain ATCC 25905 / DSM 1728 / JCM 9062 / NBRC 15155 / AMRC-C165).